The chain runs to 296 residues: MKSAPSRPRSPLQSRLALYLDLIRWNRPAGWLLLLWPTLSALWVAAGGFPGWHLLSVFTLGTILMRSAGCCINDVADRDFDRHVKRTAARPVTTGAVSVKEALVLGAVLALLAFALVLTTNAITIGISGAALAITLAYPYAKRYVSMPQAVLGVAFGMGIPMAFAAVLGEVPRLAWLLMLGNLFWVLAYDTEYAMVDRDDDIRLGLKTSAITLGRLDVPVILLCYLAFIVIWDVALMPYVQGALFTIAFALAFGQVAWHYTLIRSRSREGCFKAFRLNHWLGFTLFVGIAGSYALR.

8 helical membrane-spanning segments follow: residues 29 to 49 (AGWL…AGGF), 52 to 72 (WHLL…GCCI), 103 to 123 (LVLG…TNAI), 151 to 171 (VLGV…LGEV), 176 to 196 (WLLM…YAMV), 220 to 240 (VILL…MPYV), 243 to 263 (ALFT…YTLI), and 275 to 295 (FRLN…SYAL).

The protein belongs to the UbiA prenyltransferase family. Mg(2+) is required as a cofactor.

It is found in the cell inner membrane. The enzyme catalyses all-trans-octaprenyl diphosphate + 4-hydroxybenzoate = 4-hydroxy-3-(all-trans-octaprenyl)benzoate + diphosphate. It participates in cofactor biosynthesis; ubiquinone biosynthesis. Catalyzes the prenylation of para-hydroxybenzoate (PHB) with an all-trans polyprenyl group. Mediates the second step in the final reaction sequence of ubiquinone-8 (UQ-8) biosynthesis, which is the condensation of the polyisoprenoid side chain with PHB, generating the first membrane-bound Q intermediate 3-octaprenyl-4-hydroxybenzoate. In Albidiferax ferrireducens (strain ATCC BAA-621 / DSM 15236 / T118) (Rhodoferax ferrireducens), this protein is 4-hydroxybenzoate octaprenyltransferase.